Consider the following 483-residue polypeptide: L-2-hydroxyglutarate dehydrogenase, mitochondrial (483 aa).

The N-terminal 67 residues, 1–67 (MKHKPETAAF…VDASKTIVRG (67 aa)), are a transit peptide targeting the mitochondrion.

Belongs to the L2HGDH family. FAD is required as a cofactor.

Its subcellular location is the mitochondrion. It carries out the reaction (S)-2-hydroxyglutarate + A = 2-oxoglutarate + AH2. Functionally, catalyzes the oxidation of (S)-2-hydroxyglutarate to 2-oxoglutarate. Is specific for the (S) enantiomer and possesses very poor activity toward (R)-2-hydroxyglutarate. Has no activity toward related 2-hydroxy acids, such as glycolate, L-lactate or D-lactate. The protein is L-2-hydroxyglutarate dehydrogenase, mitochondrial of Arabidopsis thaliana (Mouse-ear cress).